The chain runs to 500 residues: Neuronal pentraxin receptor (500 aa).

The Cytoplasmic segment spans residues 1–2; that stretch reads MK. A helical; Signal-anchor for type II membrane protein transmembrane segment spans residues 3-23; sequence FLAVLLAAGMLAFLGAVICII. The Extracellular portion of the chain corresponds to 24 to 500; the sequence is ASVPLAASPA…FDVCKGRAKA (477 aa). N-linked (GlcNAc...) asparagine glycosylation occurs at asparagine 42. Residues 42-63 are compositionally biased toward low complexity; that stretch reads NASVASGAAASPGPQRSLSALH. Disordered regions lie at residues 42–81 and 162–183; these read NASVASGAAASPGPQRSLSALHGAGGSAGPPALPGAPAAS and ESGLPRGLQGAGPRRDTMADGP. Asparagine 216 is a glycosylation site (N-linked (GlcNAc...) asparagine). The 203-residue stretch at 292–494 folds into the Pentraxin (PTX) domain; sequence DAFKISIPIR…GATKAAFDVC (203 aa). A disulfide bond links cysteine 322 and cysteine 383. Ca(2+) is bound by residues asparagine 347, glutamate 425, glutamine 426, aspartate 427, and glutamine 437. Asparagine 463 is a glycosylation site (N-linked (GlcNAc...) asparagine).

As to quaternary structure, heteropentamer with NPTX1 and/or NPTX2. Also binds taipoxin-associated calcium-binding protein 49 (TCBP49/RCN2). Interacts with KLHL2. Requires Ca(2+) as cofactor. In terms of processing, ubiquitinated by a cullin-RING-based BCR (BTB-CUL3-RBX1) E3 ubiquitin-protein ligase complex containing KLHL2.

It localises to the membrane. May be involved in mediating uptake of synaptic material during synapse remodeling or in mediating the synaptic clustering of AMPA glutamate receptors at a subset of excitatory synapses. The chain is Neuronal pentraxin receptor (NPTXR) from Homo sapiens (Human).